A 345-amino-acid chain; its full sequence is 4-hydroxy-2-oxovalerate aldolase 3 (345 aa).

The 253-residue stretch at 8–260 (ITVHDMTLRD…ETGVDVWKIQ (253 aa)) folds into the Pyruvate carboxyltransferase domain. 16 to 17 (RD) lines the substrate pocket. Aspartate 17 is a binding site for Mn(2+). Histidine 20 (proton acceptor) is an active-site residue. Residues serine 170 and histidine 199 each contribute to the substrate site. Residues histidine 199 and histidine 201 each contribute to the Mn(2+) site. Tyrosine 290 contributes to the substrate binding site.

The protein belongs to the 4-hydroxy-2-oxovalerate aldolase family.

The enzyme catalyses (S)-4-hydroxy-2-oxopentanoate = acetaldehyde + pyruvate. In Comamonas testosteroni (Pseudomonas testosteroni), this protein is 4-hydroxy-2-oxovalerate aldolase 3 (aphG).